Consider the following 394-residue polypeptide: Envelope glycoprotein D (394 aa).

The N-terminal stretch at 1 to 25 (MGGTAARLGAVILFVVIVGLHGVRG) is a signal peptide. Residues 25 to 57 (GKYALADASLKMADPNRFRGKDLPVLDQLTDPP) form an interaction with TNFRSF14 region. Residues 26 to 339 (KYALADASLK…PYHPPATPNN (314 aa)) are Virion surface-facing. Histidine 64 serves as a coordination point for Zn(2+). 3 disulfide bridges follow: cysteine 91-cysteine 214, cysteine 131-cysteine 227, and cysteine 143-cysteine 152. N-linked (GlcNAc...) asparagine; by host glycosylation is found at asparagine 119 and asparagine 146. Aspartate 240 is a Zn(2+) binding site. Positions 261 to 305 (LKIAGWHGPKAPYTSTLLPPELSETPNATQPELAPEDPEDSALLE) are profusion. The segment at 275–301 (STLLPPELSETPNATQPELAPEDPEDS) is disordered. N-linked (GlcNAc...) asparagine; by host glycosylation is present at asparagine 287. A helical membrane pass occupies residues 340–364 (MGLIAGAVGGSLLAALVICGIVYWM). Topologically, residues 365 to 394 (HRRTRKAPKRIRLPHIREDDQPSSHQPLFY) are intravirion.

Belongs to the herpesviridae glycoprotein D family. As to quaternary structure, homodimer. Interacts with host receptor TNFRSF14. Interacts with host receptor NECTIN1. Interacts (via profusion domain) with gB; this interaction occurs in the absence of gH/gL. Interacts (via profusion domain) with gH/gL heterodimer; this interaction occurs in the absence of gB. Associates with the gB-gH/gL-gD complex. Interacts (via C-terminus) with UL11 tegument protein. Interacts with host RSAD2.

It localises to the virion membrane. Its subcellular location is the host Golgi apparatus. In terms of biological role, envelope glycoprotein that binds to the host cell entry receptors NECTIN1, TNFRSF14/HVEM and 3-O-sulfated heparan sulfate, promoting the virus entry into host cells. May trigger fusion with host membrane, by recruiting the fusion machinery composed of gB and gH/gL. The protein is Envelope glycoprotein D (gD) of Human herpesvirus 1 (strain Patton) (HHV-1).